The sequence spans 156 residues: Rhombotin-1 (156 aa).

LIM zinc-binding domains are found at residues 24–83 (CAGC…RLFG) and 88–147 (CAAC…EGQL).

Expressed mainly in the central nervous. Low level of expression in other tissues including thymus.

Its subcellular location is the nucleus. Its function is as follows. May be involved in gene regulation within neural lineage cells potentially by direct DNA binding or by binding to other transcription factors. The sequence is that of Rhombotin-1 (LMO1) from Homo sapiens (Human).